The primary structure comprises 227 residues: Probable N-acetyltransferase family 8 member 5 (227 aa).

3 helical membrane passes run 29–49, 53–73, and 201–221; these read IPAA…LFVM, IVLV…LLLL, and ISII…SFPS. One can recognise an N-acetyltransferase domain in the interval 69 to 213; that stretch reads FLLLLLRLLA…IKWLITFSII (145 aa).

This sequence belongs to the camello family.

Its subcellular location is the membrane. In terms of biological role, may play a role in regulation of gastrulation. The polypeptide is Probable N-acetyltransferase family 8 member 5 (Mus musculus (Mouse)).